Here is a 772-residue protein sequence, read N- to C-terminus: Angiomotin-like protein 2 (772 aa).

Disordered stretches follow at residues 41 to 158 (GGAG…HVRS), 170 to 239 (RNGA…SPHF), and 260 to 299 (QYQY…PSAQ). 3 stretches are compositionally biased toward basic and acidic residues: residues 80–91 (QGGETHLAENRL), 100–112 (KGEE…EAKA), and 142–153 (RRQDEALRELRH). Positions 101-303 (GEELPTYEEA…GPPSAQATLG (203 aa)) are required for interaction with CDH5. Residue tyrosine 107 is modified to Phosphotyrosine; by FGFR1. Polar residues predominate over residues 178-191 (HMSSSHSFPQLARS). The span at 197 to 214 (PRGPPAEGPEPRGPPPQY) shows a compositional bias: pro residues. Residues 221–303 (QETAAVTDPR…GPPSAQATLG (83 aa)) form a required for interaction with CDH1 region. Residues 305–578 (AHLAQMETVL…KYLEERAMRQ (274 aa)) are a coiled coil. Glycyl lysine isopeptide (Lys-Gly) (interchain with G-Cter in ubiquitin) cross-links involve residues lysine 343 and lysine 404. Disordered stretches follow at residues 596–615 (IRHS…LLPG) and 680–752 (GLVS…RTPS). Residues 686-699 (RQTDARPAGDRVPA) are compositionally biased toward basic and acidic residues. Residues 718-733 (DGSTQTDGPADNTSAC) show a composition bias toward polar residues. A phosphoserine mark is found at serine 752 and serine 755. A PDZ-binding motif is present at residues 769 to 772 (EILI).

This sequence belongs to the angiomotin family. As to quaternary structure, part of a complex composed of AMOTL2, MAGI1 and CDH5, within the complex AMOTL2 acts as a scaffold protein for the interaction of MAGI1 with CDH5. The complex is required for coupling actin fibers to cell junctions in endothelial cells. Within the complex AMOTL2 (via its N-terminus) interacts with CDH5. Interacts (via N-terminus) with MAGI1. Interacts (via N-terminus) with ACTB; the interaction facilitates binding of cell junction complexes to actin fibers in endothelial cells. Interacts with CDH1; the interaction may facilitate binding of radial actin fibers to cell junction complexes. Interacts with SRC. Interacts with YAP1; the interaction is required for ubiquitination of AMOTL2 and localization of YAP1 to tight junctions. Interacts with WWP1; the interaction facilitates WWP1 interaction with the Crumbs complex and subsequent WWP1 translocation to the plasma membrane. WWP1 interaction with the Crumbs complex promotes WWP1 monoubiquitination of AMOTL2 which subsequently activates the Hippo signaling pathway. When ubiquitinated interacts with LATS2 (via UBA domain); the interaction promotes LATS2 phosphorylation of YAP1. Interacts (via PPXY motif) with WWTR1/TAZ (via WW domain); the interaction promotes WWTR1/TAZ localization to the cytoplasm and thereby inhibition of its transcriptional properties. Interacts with PHLDB2; interaction may facilitate PHLDB2 localization to the myotube podosome cortex that surrounds the core. Post-translationally, phosphorylation at Tyr-107 is necessary for efficient binding to SRC and synergistically functioning with SRC to activate the downstream MAPK pathway. Monoubiquitinated at Lys-343 and Lys-404 by Crumbs complex-bound WWP1. De-ubiquitinated at Lys-343 and Lys-404 by USP9X; the interaction may be promoted by cell contact inhibition. Deubiquitination of AMOTL2 negatively regulates Hippo signaling activation. Expressed in skeletal muscle at neuromuscular junctions (at protein level).

It localises to the recycling endosome. The protein resides in the cytoplasm. Its subcellular location is the cell projection. The protein localises to the podosome. It is found in the cell junction. Regulates the translocation of phosphorylated SRC to peripheral cell-matrix adhesion sites. Required for proper architecture of actin filaments. Plays a role in coupling actin fibers to cell junctions in endothelial cells and is therefore required for correct endothelial cell morphology via facilitating transcellular transmission of mechanical force resulting in endothelial cell elongation. Required for the anchoring of radial actin fibers to CDH1 junction complexes at the cell membrane which facilitates organization of radial actin fiber structure and cellular response to contractile forces. This contributes to maintenance of cell area, size, shape, epithelial sheet organization and trophectoderm cell properties that facilitate blastocyst zona hatching. Inhibits the Wnt/beta-catenin signaling pathway, probably by recruiting CTNNB1 to recycling endosomes and hence preventing its translocation to the nucleus. Participates in angiogenesis. Activates the Hippo signaling pathway in response to cell contact inhibition via interaction with and ubiquitination by Crumbs complex-bound WWP1. Ubiquitinated AMOTL2 then interacts with LATS2 which in turn phosphorylates YAP1, excluding it from the nucleus and localizing it to the cytoplasm and tight junctions, therefore ultimately repressing YAP1-driven transcription of target genes. Acts to inhibit WWTR1/TAZ transcriptional coactivator activity via sequestering WWTR1/TAZ in the cytoplasm and at tight junctions. Regulates the size and protein composition of the podosome cortex and core at myofibril neuromuscular junctions. Selectively promotes FGF-induced MAPK activation through SRC. May play a role in the polarity, proliferation and migration of endothelial cells. The chain is Angiomotin-like protein 2 from Mus musculus (Mouse).